A 302-amino-acid chain; its full sequence is UDP-3-O-acyl-N-acetylglucosamine deacetylase (302 aa).

3 residues coordinate Zn(2+): His-78, His-235, and Asp-239. His-262 (proton donor) is an active-site residue.

Belongs to the LpxC family. Requires Zn(2+) as cofactor.

It carries out the reaction a UDP-3-O-[(3R)-3-hydroxyacyl]-N-acetyl-alpha-D-glucosamine + H2O = a UDP-3-O-[(3R)-3-hydroxyacyl]-alpha-D-glucosamine + acetate. The protein operates within glycolipid biosynthesis; lipid IV(A) biosynthesis; lipid IV(A) from (3R)-3-hydroxytetradecanoyl-[acyl-carrier-protein] and UDP-N-acetyl-alpha-D-glucosamine: step 2/6. Catalyzes the hydrolysis of UDP-3-O-myristoyl-N-acetylglucosamine to form UDP-3-O-myristoylglucosamine and acetate, the committed step in lipid A biosynthesis. The sequence is that of UDP-3-O-acyl-N-acetylglucosamine deacetylase from Bdellovibrio bacteriovorus (strain ATCC 15356 / DSM 50701 / NCIMB 9529 / HD100).